The chain runs to 179 residues: Vi polysaccharide biosynthesis protein TviA (179 aa).

It functions in the pathway glycan metabolism; Vi-antigen biosynthesis. It participates in capsule biogenesis; capsule polysaccharide biosynthesis. This Salmonella typhi protein is Vi polysaccharide biosynthesis protein TviA (tviA).